The following is a 1093-amino-acid chain: Probable cellulose synthase A catalytic subunit 3 [UDP-forming] (1093 aa).

The Cytoplasmic segment spans residues 1-280; that stretch reads MEASAGLVAG…PSSQINPYRM (280 aa). Cysteine 39, cysteine 42, cysteine 58, cysteine 61, cysteine 66, cysteine 69, cysteine 81, and cysteine 84 together coordinate Zn(2+). The RING-type; degenerate zinc finger occupies 39 to 85; the sequence is CQICGDDVGLNPDGEPFVACNECAFPVCRDCYEYERREGTQNCPQCK. Over residues 233–246 the composition is skewed to basic and acidic residues; it reads LHQMRNDGGGKDWD. The segment at 233-257 is disordered; that stretch reads LHQMRNDGGGKDWDGDGDDGDLPLM. The helical transmembrane segment at 281–301 threads the bilayer; sequence VIIIRLVVLGFFFHYRVMHPV. At 302–303 the chain is on the extracellular side; it reads PD. The helical transmembrane segment at 304–324 threads the bilayer; the sequence is AFALWLISVICEIWFAMSWIL. The Cytoplasmic portion of the chain corresponds to 325–869; it reads DQFPKWFPIE…CLERFSYINS (545 aa). UDP-alpha-D-glucose contacts are provided by serine 363, lysine 369, glutamate 370, and aspartate 399. The active site involves aspartate 399. Positions 453-480 form a coiled coil; it reads VRERRAMKREYEEFKVRINALVAKAQKV. Position 540 (lysine 540) interacts with UDP-alpha-D-glucose. Mn(2+) is bound by residues lysine 541 and aspartate 565. Aspartate 793 is a catalytic residue. The chain crosses the membrane as a helical span at residues 870 to 890; that stretch reads IVYPFTSIPLLAYCTLPAICL. Over 891 to 902 the chain is Extracellular; it reads LTGKFITPELTN. The helical transmembrane segment at 903-923 threads the bilayer; sequence VASLWFMSLFICIFATGILEM. The Cytoplasmic segment spans residues 924-939; the sequence is RWSGVGIDDWWRNEQF. The chain crosses the membrane as a helical span at residues 940 to 960; the sequence is WVIGGVSSHLFALFQGLLKVI. Over 961–988 the chain is Extracellular; it reads AGIDTSFTVTSKGGDDEEFSELYTFKWT. Residues 989 to 1009 form a helical membrane-spanning segment; the sequence is TLLIPPTTLLLLNFIGVVAGV. Residues 1010–1020 lie on the Cytoplasmic side of the membrane; that stretch reads SNAINNGYESW. A helical membrane pass occupies residues 1021-1041; it reads GPLFGKLFFAFWVIVHLYPFL. Residues 1042-1050 are Extracellular-facing; it reads KGLVGRQNR. A helical transmembrane segment spans residues 1051–1071; it reads TPTIVIVWSILLASIFSLLWV. Topologically, residues 1072–1093 are cytoplasmic; the sequence is RIDPFLAKNDGPLLEECGLDCN.

This sequence belongs to the glycosyltransferase 2 family. Plant cellulose synthase subfamily. Requires Mn(2+) as cofactor. It depends on Zn(2+) as a cofactor.

It is found in the cell membrane. It catalyses the reaction [(1-&gt;4)-beta-D-glucosyl](n) + UDP-alpha-D-glucose = [(1-&gt;4)-beta-D-glucosyl](n+1) + UDP + H(+). The protein operates within glycan metabolism; plant cellulose biosynthesis. Its function is as follows. Probable catalytic subunit of cellulose synthase terminal complexes ('rosettes'), required for beta-1,4-glucan microfibril crystallization, a major mechanism of the cell wall formation. The polypeptide is Probable cellulose synthase A catalytic subunit 3 [UDP-forming] (CESA3) (Oryza sativa subsp. japonica (Rice)).